The chain runs to 637 residues: MQGTVNSERLKFDAEVGKVLKLVIHSLYTNKDIFLRELISNASDACDKLRYQSLSNQDLMDAGSELKIVISVDKDKNRLYISDNGIGMNREDLINNLGTIAHSGTQKFLDAINSGASSQQGVVELIGKFGVGFYSAFMVASEVIVESCKAGESVGYQWKSSGDGEFVISQLESDQVSRGTRITLALKPEECEFVDKFRIEHIVTTYSYHINYPVYFLNDKGEEERLNSEAAIWTKAKDEISAEEHQNFFRTVAHVGGEPWMILHNKNEGVIEYTNLLYIPSIKPFDLFHPDRKCSVKLYVNKVFITEDNVQIIPQYLRFLKGIIDSSDLPLNISRETLQNNKIIEKIKRSLVKRVLSELKKKAESNIEDYTKFWDNFGSVLKEGLCESMNTEFREELISVCRFYSTHSNDSLISLEDYIERMKPEQNNIYYLTGNDLDSIKKSPQLEGFVSRGVEVLLLVDPVDDFWTNVVTDYQKVPLRSVIRADEDLEKFSDVEKGDESKDSQNEDTQSKEKVDKFIGYAAQVLNNLVSNVRVSKKLTDSPVCLAVADGSMDIRMERFLREQKQLNYKSTKILEINSKHPIISKMIDQYTENGESAMLCNMLHLLLGQACILEGEELQNVSDFAERMNSVLSQIN.

The tract at residues 1–335 is a; substrate-binding; the sequence is MQGTVNSERL…SSDLPLNISR (335 aa). Positions 336–559 are b; that stretch reads ETLQNNKIIE…DGSMDIRMER (224 aa). The interval 560–637 is c; it reads FLREQKQLNY…RMNSVLSQIN (78 aa).

It belongs to the heat shock protein 90 family. As to quaternary structure, homodimer.

Its subcellular location is the cytoplasm. Functionally, molecular chaperone. Has ATPase activity. The chain is Chaperone protein HtpG from Ehrlichia ruminantium (strain Gardel).